The following is a 197-amino-acid chain: Beta-crystallin A2 (197 aa).

The segment at 1–11 is N-terminal arm; sequence MSSASAPGPAP. 2 Beta/gamma crystallin 'Greek key' domains span residues 12–52 and 53–99; these read ACLT…KVEN and GAWV…RPVL. The connecting peptide stretch occupies residues 100-105; that stretch reads CANHSD. Beta/gamma crystallin 'Greek key' domains lie at 106 to 147 and 148 to 196; these read SRVT…KVSS and GAWV…RRVQ.

It belongs to the beta/gamma-crystallin family. In terms of assembly, homo/heterodimer, or complexes of higher-order. The structure of beta-crystallin oligomers seems to be stabilized through interactions between the N-terminal arms.

Its function is as follows. Crystallins are the dominant structural components of the vertebrate eye lens. This is Beta-crystallin A2 (CRYBA2) from Oryctolagus cuniculus (Rabbit).